The sequence spans 495 residues: MPQQTAVVVLAAGAGTRMRSKTPKVLHSLAGRSMLAHALHAANEIDPTHLITVVGHDREQVGAAVAAVAGELGREIVPALQEQQLGTGHAVQCALRALPADFAGDLLVTSADVPLLDGHTLGALLDEHRSYQERSAVTVLTFVPDDPNGYGRIVRDADGQVVEIVEHADATPEQAAITEVNSGVYAFDATVLRAMIGRLSTANAQHELYLTDVLRLAREAGHPVHGARLLDAAKVTGVNDRVQLSIATRTMNRYILERHMRAGVTIIDPASTWVDAGVRIGRDAVLRPGVQLLGSTVIGEDAEIGPDSTLTDVRVGDGAKVVRTHGEGATIGPNASVGPFAYLRPGTILGEAGKLGAFVETKNADIGAHSKVPHLTYVGDATIGEHSNIGASSVFVNYDGVKKHHTVVGSHVRTGSDTMFVAPVTVGDGAYTAAGTVLRRNVPPGALAVSGGPQKNIENWVQRHRPGTAAATAAAQALAADEKSSQATEQKDGEQ.

The pyrophosphorylase stretch occupies residues 1–241 (MPQQTAVVVL…AAKVTGVNDR (241 aa)). UDP-N-acetyl-alpha-D-glucosamine is bound by residues 10 to 13 (LAAG), lysine 24, glutamine 81, and 86 to 87 (GT). Aspartate 112 lines the Mg(2+) pocket. UDP-N-acetyl-alpha-D-glucosamine-binding residues include glycine 151, glutamate 166, asparagine 181, and asparagine 239. Asparagine 239 is a Mg(2+) binding site. The linker stretch occupies residues 242–262 (VQLSIATRTMNRYILERHMRA). The segment at 263–495 (GVTIIDPAST…QATEQKDGEQ (233 aa)) is N-acetyltransferase. UDP-N-acetyl-alpha-D-glucosamine contacts are provided by arginine 344 and lysine 362. Histidine 374 serves as the catalytic Proton acceptor. Residues tyrosine 377 and asparagine 388 each contribute to the UDP-N-acetyl-alpha-D-glucosamine site. Acetyl-CoA contacts are provided by residues alanine 391, 397 to 398 (NY), serine 416, and alanine 434. Positions 467 to 495 (GTAAATAAAQALAADEKSSQATEQKDGEQ) are disordered. Over residues 468–479 (TAAATAAAQALA) the composition is skewed to low complexity. The segment covering 480-495 (ADEKSSQATEQKDGEQ) has biased composition (basic and acidic residues).

It in the N-terminal section; belongs to the N-acetylglucosamine-1-phosphate uridyltransferase family. The protein in the C-terminal section; belongs to the transferase hexapeptide repeat family. In terms of assembly, homotrimer. Mg(2+) serves as cofactor.

Its subcellular location is the cytoplasm. It carries out the reaction alpha-D-glucosamine 1-phosphate + acetyl-CoA = N-acetyl-alpha-D-glucosamine 1-phosphate + CoA + H(+). The catalysed reaction is N-acetyl-alpha-D-glucosamine 1-phosphate + UTP + H(+) = UDP-N-acetyl-alpha-D-glucosamine + diphosphate. It participates in nucleotide-sugar biosynthesis; UDP-N-acetyl-alpha-D-glucosamine biosynthesis; N-acetyl-alpha-D-glucosamine 1-phosphate from alpha-D-glucosamine 6-phosphate (route II): step 2/2. Its pathway is nucleotide-sugar biosynthesis; UDP-N-acetyl-alpha-D-glucosamine biosynthesis; UDP-N-acetyl-alpha-D-glucosamine from N-acetyl-alpha-D-glucosamine 1-phosphate: step 1/1. It functions in the pathway bacterial outer membrane biogenesis; LPS lipid A biosynthesis. In terms of biological role, catalyzes the last two sequential reactions in the de novo biosynthetic pathway for UDP-N-acetylglucosamine (UDP-GlcNAc). The C-terminal domain catalyzes the transfer of acetyl group from acetyl coenzyme A to glucosamine-1-phosphate (GlcN-1-P) to produce N-acetylglucosamine-1-phosphate (GlcNAc-1-P), which is converted into UDP-GlcNAc by the transfer of uridine 5-monophosphate (from uridine 5-triphosphate), a reaction catalyzed by the N-terminal domain. This is Bifunctional protein GlmU from Nocardia farcinica (strain IFM 10152).